A 353-amino-acid chain; its full sequence is UDP-N-acetylglucosamine--N-acetylmuramyl-(pentapeptide) pyrophosphoryl-undecaprenol N-acetylglucosamine transferase (353 aa).

UDP-N-acetyl-alpha-D-glucosamine-binding positions include asparagine 123, arginine 161, serine 189, isoleucine 243, alanine 262–glutamate 267, and glutamine 287.

The protein belongs to the glycosyltransferase 28 family. MurG subfamily.

It localises to the cell membrane. The enzyme catalyses di-trans,octa-cis-undecaprenyl diphospho-N-acetyl-alpha-D-muramoyl-L-alanyl-D-glutamyl-meso-2,6-diaminopimeloyl-D-alanyl-D-alanine + UDP-N-acetyl-alpha-D-glucosamine = di-trans,octa-cis-undecaprenyl diphospho-[N-acetyl-alpha-D-glucosaminyl-(1-&gt;4)]-N-acetyl-alpha-D-muramoyl-L-alanyl-D-glutamyl-meso-2,6-diaminopimeloyl-D-alanyl-D-alanine + UDP + H(+). It participates in cell wall biogenesis; peptidoglycan biosynthesis. In terms of biological role, cell wall formation. Catalyzes the transfer of a GlcNAc subunit on undecaprenyl-pyrophosphoryl-MurNAc-pentapeptide (lipid intermediate I) to form undecaprenyl-pyrophosphoryl-MurNAc-(pentapeptide)GlcNAc (lipid intermediate II). The sequence is that of UDP-N-acetylglucosamine--N-acetylmuramyl-(pentapeptide) pyrophosphoryl-undecaprenol N-acetylglucosamine transferase from Buchnera aphidicola subsp. Baizongia pistaciae (strain Bp).